Reading from the N-terminus, the 1589-residue chain is Pentafunctional AROM polypeptide (1589 aa).

A 3-dehydroquinate synthase region spans residues 1–392 (MVKFEKVPIL…YGKSAHYVND (392 aa)). NAD(+) is bound by residues 43-45 (DTN), 78-81 (EANK), 109-111 (GGI), and Asp-114. 7-phospho-2-dehydro-3-deoxy-D-arabino-heptonate is bound at residue Arg-125. 134 to 135 (TS) contacts NAD(+). 7-phospho-2-dehydro-3-deoxy-D-arabino-heptonate contacts are provided by Asp-141 and Lys-147. Position 156 (Lys-156) interacts with NAD(+). Asn-157 provides a ligand contact to 7-phospho-2-dehydro-3-deoxy-D-arabino-heptonate. Residues 174–177 (WLET) and Asn-185 each bind NAD(+). Glu-189 is a Zn(2+) binding site. Residues 189-192 (EVIK) and Lys-258 contribute to the 7-phospho-2-dehydro-3-deoxy-D-arabino-heptonate site. Glu-268 (proton acceptor; for 3-dehydroquinate synthase activity) is an active-site residue. 7-phospho-2-dehydro-3-deoxy-D-arabino-heptonate-binding positions include 272-276 (RNLLN) and His-279. Zn(2+) is bound at residue His-279. His-283 (proton acceptor; for 3-dehydroquinate synthase activity) is an active-site residue. 7-phospho-2-dehydro-3-deoxy-D-arabino-heptonate-binding residues include His-295 and Lys-364. His-295 contributes to the Zn(2+) binding site. The tract at residues 405–872 (VYPFSNIPQE…WDVLHTELGA (468 aa)) is EPSP synthase. Residue Cys-854 is the For EPSP synthase activity of the active site. A shikimate kinase region spans residues 891-1081 (SVVLIGMRAA…VPNKRSAFVC (191 aa)). Residue 896–903 (GMRAAGKS) participates in ATP binding. The interval 1082–1294 (LTFGDLTEKA…SAPGQLTLAQ (213 aa)) is 3-dehydroquinase. The active-site Proton acceptor; for 3-dehydroquinate dehydratase activity is the His-1199. Lys-1228 functions as the Schiff-base intermediate with substrate; for 3-dehydroquinate dehydratase activity in the catalytic mechanism. The shikimate dehydrogenase stretch occupies residues 1307-1589 (SKKFFVVGNP…QEIFNAVTRD (283 aa)).

This sequence in the N-terminal section; belongs to the sugar phosphate cyclases superfamily. Dehydroquinate synthase family. In the 2nd section; belongs to the EPSP synthase family. It in the 3rd section; belongs to the shikimate kinase family. The protein in the 4th section; belongs to the type-I 3-dehydroquinase family. This sequence in the C-terminal section; belongs to the shikimate dehydrogenase family. As to quaternary structure, homodimer. Requires Zn(2+) as cofactor.

The protein resides in the cytoplasm. The enzyme catalyses 7-phospho-2-dehydro-3-deoxy-D-arabino-heptonate = 3-dehydroquinate + phosphate. The catalysed reaction is 3-dehydroquinate = 3-dehydroshikimate + H2O. It catalyses the reaction shikimate + NADP(+) = 3-dehydroshikimate + NADPH + H(+). It carries out the reaction shikimate + ATP = 3-phosphoshikimate + ADP + H(+). The enzyme catalyses 3-phosphoshikimate + phosphoenolpyruvate = 5-O-(1-carboxyvinyl)-3-phosphoshikimate + phosphate. It functions in the pathway metabolic intermediate biosynthesis; chorismate biosynthesis; chorismate from D-erythrose 4-phosphate and phosphoenolpyruvate: step 2/7. Its pathway is metabolic intermediate biosynthesis; chorismate biosynthesis; chorismate from D-erythrose 4-phosphate and phosphoenolpyruvate: step 3/7. It participates in metabolic intermediate biosynthesis; chorismate biosynthesis; chorismate from D-erythrose 4-phosphate and phosphoenolpyruvate: step 4/7. The protein operates within metabolic intermediate biosynthesis; chorismate biosynthesis; chorismate from D-erythrose 4-phosphate and phosphoenolpyruvate: step 5/7. It functions in the pathway metabolic intermediate biosynthesis; chorismate biosynthesis; chorismate from D-erythrose 4-phosphate and phosphoenolpyruvate: step 6/7. The AROM polypeptide catalyzes 5 consecutive enzymatic reactions in prechorismate polyaromatic amino acid biosynthesis. In Zygosaccharomyces rouxii (strain ATCC 2623 / CBS 732 / NBRC 1130 / NCYC 568 / NRRL Y-229), this protein is Pentafunctional AROM polypeptide.